The primary structure comprises 55 residues: Putative virulence-regulating protein PA2146 (55 aa).

The disordered stretch occupies residues 1–55; that stretch reads MAQHQGGKGNFAEDPKRASEAGKKGGQASGGNFKNDPQRASEAGKKGGQRSHGGN. 2 stretches are compositionally biased toward basic and acidic residues: residues 11-23 and 36-45; these read FAED…EAGK and DPQRASEAGK.

It belongs to the con-10 family.

Its function is as follows. May be involved in the regulation of the production of pyocyanine, one of the major virulence factors secreted by P.aeruginosa, and other virulence factors. The sequence is that of Putative virulence-regulating protein PA2146 from Pseudomonas aeruginosa (strain ATCC 15692 / DSM 22644 / CIP 104116 / JCM 14847 / LMG 12228 / 1C / PRS 101 / PAO1).